Here is an 87-residue protein sequence, read N- to C-terminus: U14-lycotoxin-Ls1a (87 aa).

The N-terminal stretch at 1-20 (MNSKVFAVLLLLALLTCVLS) is a signal peptide. The region spanning 21-66 (EKYCPTPRNTSCKKMNIRNNCCRDSDCTSNAFCCAEPCGNFCHKAS) is the WAP domain. 5 disulfide bridges follow: cysteine 24–cysteine 54, cysteine 32–cysteine 58, cysteine 41–cysteine 53, cysteine 42–cysteine 80, and cysteine 47–cysteine 62.

The protein belongs to the venom protein 11 family. 01 (wap-1) subfamily. Post-translationally, contains 5 disulfide bonds. As to expression, expressed by the venom gland.

Its subcellular location is the secreted. Its function is as follows. Has antibacterial activity. This Lycosa singoriensis (Wolf spider) protein is U14-lycotoxin-Ls1a.